The primary structure comprises 273 residues: 4-hydroxy-tetrahydrodipicolinate reductase (273 aa).

Residues 12–17 (GAGGRM) and Glu-38 each bind NAD(+). Position 39 (Arg-39) interacts with NADP(+). Residues 102 to 104 (GTT) and 126 to 129 (AANF) each bind NAD(+). His-159 acts as the Proton donor/acceptor in catalysis. His-160 lines the (S)-2,3,4,5-tetrahydrodipicolinate pocket. Lys-163 serves as the catalytic Proton donor. 169–170 (GT) is a (S)-2,3,4,5-tetrahydrodipicolinate binding site.

The protein belongs to the DapB family. Homotetramer.

It localises to the cytoplasm. The catalysed reaction is (S)-2,3,4,5-tetrahydrodipicolinate + NAD(+) + H2O = (2S,4S)-4-hydroxy-2,3,4,5-tetrahydrodipicolinate + NADH + H(+). It carries out the reaction (S)-2,3,4,5-tetrahydrodipicolinate + NADP(+) + H2O = (2S,4S)-4-hydroxy-2,3,4,5-tetrahydrodipicolinate + NADPH + H(+). It participates in amino-acid biosynthesis; L-lysine biosynthesis via DAP pathway; (S)-tetrahydrodipicolinate from L-aspartate: step 4/4. Its function is as follows. Catalyzes the conversion of 4-hydroxy-tetrahydrodipicolinate (HTPA) to tetrahydrodipicolinate. The chain is 4-hydroxy-tetrahydrodipicolinate reductase from Shigella boydii serotype 18 (strain CDC 3083-94 / BS512).